A 463-amino-acid polypeptide reads, in one-letter code: Phosphoglycerate transporter protein (463 aa).

Over Met1 to Gln29 the chain is Cytoplasmic. The next 12 helical transmembrane spans lie at Ala30 to Leu50, Leu59 to Ile79, Ile106 to Phe126, Asn127 to Pro147, Ile160 to Leu180, Ala188 to Gly208, Val267 to Val287, Val297 to Ser317, Met326 to Ser346, Leu349 to Leu369, Gly391 to Asp411, and Leu413 to Cys433.

The protein belongs to the major facilitator superfamily. Organophosphate:Pi antiporter (OPA) (TC 2.A.1.4) family.

It localises to the cell inner membrane. Functionally, the phosphoglycerate transporter protein is a part of the PGT transport system. It is the membrane bound transporter for phosphoglycerate into salmonella. This is Phosphoglycerate transporter protein (pgtP) from Salmonella typhimurium (strain LT2 / SGSC1412 / ATCC 700720).